Here is a 122-residue protein sequence, read N- to C-terminus: Small ribosomal subunit protein uS12c (122 aa).

It belongs to the universal ribosomal protein uS12 family. Part of the 30S ribosomal subunit.

The protein localises to the plastid. The protein resides in the chloroplast. With S4 and S5 plays an important role in translational accuracy. Located at the interface of the 30S and 50S subunits. The sequence is that of Small ribosomal subunit protein uS12c (rps12) from Mesostigma viride (Green alga).